Here is a 387-residue protein sequence, read N- to C-terminus: Succinate--CoA ligase [ADP-forming] subunit beta (387 aa).

Residues 9–244 enclose the ATP-grasp domain; that stretch reads KQLFASYGLP…VSQEDDRENR (236 aa). ATP contacts are provided by residues Lys-46, 53–55, Glu-99, Cys-102, and Glu-107; that span reads GRG. Mg(2+)-binding residues include Asn-199 and Asp-213. Substrate-binding positions include Asn-264 and 321–323; that span reads GIV.

Belongs to the succinate/malate CoA ligase beta subunit family. As to quaternary structure, heterotetramer of two alpha and two beta subunits. Mg(2+) serves as cofactor.

The catalysed reaction is succinate + ATP + CoA = succinyl-CoA + ADP + phosphate. The enzyme catalyses GTP + succinate + CoA = succinyl-CoA + GDP + phosphate. It functions in the pathway carbohydrate metabolism; tricarboxylic acid cycle; succinate from succinyl-CoA (ligase route): step 1/1. Succinyl-CoA synthetase functions in the citric acid cycle (TCA), coupling the hydrolysis of succinyl-CoA to the synthesis of either ATP or GTP and thus represents the only step of substrate-level phosphorylation in the TCA. The beta subunit provides nucleotide specificity of the enzyme and binds the substrate succinate, while the binding sites for coenzyme A and phosphate are found in the alpha subunit. The chain is Succinate--CoA ligase [ADP-forming] subunit beta from Legionella pneumophila (strain Corby).